Here is a 329-residue protein sequence, read N- to C-terminus: Probable endo-beta-1,4-glucanase B (329 aa).

An N-terminal signal peptide occupies residues 1-18 (MKFGSIVLIAAAAGSAVA). N-linked (GlcNAc...) asparagine glycans are attached at residues Asn33 and Asn96. Glu156 serves as the catalytic Proton donor. The active-site Nucleophile is the Glu263.

The protein belongs to the glycosyl hydrolase 5 (cellulase A) family.

The protein localises to the secreted. The enzyme catalyses Endohydrolysis of (1-&gt;4)-beta-D-glucosidic linkages in cellulose, lichenin and cereal beta-D-glucans.. Has endoglucanase activity on substrates containing beta-1,4 glycosidic bonds, like in carboxymethylcellulose (CMC), hydroxyethylcellulose (HEC) and beta-glucan. Involved in the degradation of complex natural cellulosic substrates. This Neosartorya fischeri (strain ATCC 1020 / DSM 3700 / CBS 544.65 / FGSC A1164 / JCM 1740 / NRRL 181 / WB 181) (Aspergillus fischerianus) protein is Probable endo-beta-1,4-glucanase B (eglB).